The following is a 28-amino-acid chain: Conotoxin Cal6.43b (28 aa).

3 cysteine pairs are disulfide-bonded: cysteine 3–cysteine 13, cysteine 7–cysteine 19, and cysteine 12–cysteine 25.

In terms of tissue distribution, expressed by the venom duct.

It is found in the secreted. In terms of biological role, probable neurotoxin with unknown target. Possibly targets ion channels. This chain is Conotoxin Cal6.43b, found in Californiconus californicus (California cone).